Reading from the N-terminus, the 346-residue chain is Mannonate dehydratase (346 aa).

This sequence belongs to the mannonate dehydratase family. It depends on Fe(2+) as a cofactor. The cofactor is Mn(2+).

It carries out the reaction D-mannonate = 2-dehydro-3-deoxy-D-gluconate + H2O. It functions in the pathway carbohydrate metabolism; pentose and glucuronate interconversion. Catalyzes the dehydration of D-mannonate. The polypeptide is Mannonate dehydratase (Cupriavidus taiwanensis (strain DSM 17343 / BCRC 17206 / CCUG 44338 / CIP 107171 / LMG 19424 / R1) (Ralstonia taiwanensis (strain LMG 19424))).